Consider the following 529-residue polypeptide: Peptide chain release factor 3 (529 aa).

The region spanning 11–280 is the tr-type G domain; sequence NKRRTFAIIS…GLVKWAPAPM (270 aa). Residues 20–27, 88–92, and 142–145 contribute to the GTP site; these read SHPDAGKT, DTPGH, and NKLD.

The protein belongs to the TRAFAC class translation factor GTPase superfamily. Classic translation factor GTPase family. PrfC subfamily.

It localises to the cytoplasm. Functionally, increases the formation of ribosomal termination complexes and stimulates activities of RF-1 and RF-2. It binds guanine nucleotides and has strong preference for UGA stop codons. It may interact directly with the ribosome. The stimulation of RF-1 and RF-2 is significantly reduced by GTP and GDP, but not by GMP. This Proteus mirabilis (strain HI4320) protein is Peptide chain release factor 3.